The following is a 265-amino-acid chain: Hydroxyethylthiazole kinase (265 aa).

Residue Met36 coordinates substrate. ATP contacts are provided by Lys112 and Ser160. Gly187 contacts substrate.

It belongs to the Thz kinase family. Requires Mg(2+) as cofactor.

The enzyme catalyses 5-(2-hydroxyethyl)-4-methylthiazole + ATP = 4-methyl-5-(2-phosphooxyethyl)-thiazole + ADP + H(+). It functions in the pathway cofactor biosynthesis; thiamine diphosphate biosynthesis; 4-methyl-5-(2-phosphoethyl)-thiazole from 5-(2-hydroxyethyl)-4-methylthiazole: step 1/1. Catalyzes the phosphorylation of the hydroxyl group of 4-methyl-5-beta-hydroxyethylthiazole (THZ). This is Hydroxyethylthiazole kinase from Clostridium perfringens (strain ATCC 13124 / DSM 756 / JCM 1290 / NCIMB 6125 / NCTC 8237 / Type A).